We begin with the raw amino-acid sequence, 737 residues long: 1,4-alpha-glucan branching enzyme GlgB (737 aa).

The Nucleophile role is filled by Asp419. Glu472 serves as the catalytic Proton donor.

This sequence belongs to the glycosyl hydrolase 13 family. GlgB subfamily. As to quaternary structure, monomer.

The enzyme catalyses Transfers a segment of a (1-&gt;4)-alpha-D-glucan chain to a primary hydroxy group in a similar glucan chain.. It functions in the pathway glycan biosynthesis; glycogen biosynthesis. Catalyzes the formation of the alpha-1,6-glucosidic linkages in glycogen by scission of a 1,4-alpha-linked oligosaccharide from growing alpha-1,4-glucan chains and the subsequent attachment of the oligosaccharide to the alpha-1,6 position. This Mesorhizobium japonicum (strain LMG 29417 / CECT 9101 / MAFF 303099) (Mesorhizobium loti (strain MAFF 303099)) protein is 1,4-alpha-glucan branching enzyme GlgB.